A 279-amino-acid polypeptide reads, in one-letter code: Alcohol dehydrogenase-related 31 kDa protein (279 aa).

Residue 11–34 (YVADCGGIALETSKVLMTKNIAKL) coordinates NAD(+). Residue Ser139 participates in substrate binding. Catalysis depends on Tyr152, which acts as the Proton acceptor.

This sequence belongs to the short-chain dehydrogenases/reductases (SDR) family.

This is Alcohol dehydrogenase-related 31 kDa protein (Adhr) from Drosophila guanche (Fruit fly).